Reading from the N-terminus, the 395-residue chain is Probable L-tyrosine/L-aspartate decarboxylase (395 aa).

N6-(pyridoxal phosphate)lysine is present on K242.

It belongs to the group II decarboxylase family. MfnA subfamily. Pyridoxal 5'-phosphate serves as cofactor.

It carries out the reaction L-tyrosine + H(+) = tyramine + CO2. The enzyme catalyses L-aspartate + H(+) = beta-alanine + CO2. Its pathway is cofactor biosynthesis; methanofuran biosynthesis. The protein operates within cofactor biosynthesis; coenzyme A biosynthesis. Functionally, catalyzes the decarboxylation of L-tyrosine to produce tyramine for methanofuran biosynthesis. Can also catalyze the decarboxylation of L-aspartate to produce beta-alanine for coenzyme A (CoA) biosynthesis. The chain is Probable L-tyrosine/L-aspartate decarboxylase from Methanosarcina acetivorans (strain ATCC 35395 / DSM 2834 / JCM 12185 / C2A).